The following is a 345-amino-acid chain: Phosphoribosylformylglycinamidine cyclo-ligase (345 aa).

This sequence belongs to the AIR synthase family.

Its subcellular location is the cytoplasm. The catalysed reaction is 2-formamido-N(1)-(5-O-phospho-beta-D-ribosyl)acetamidine + ATP = 5-amino-1-(5-phospho-beta-D-ribosyl)imidazole + ADP + phosphate + H(+). It functions in the pathway purine metabolism; IMP biosynthesis via de novo pathway; 5-amino-1-(5-phospho-D-ribosyl)imidazole from N(2)-formyl-N(1)-(5-phospho-D-ribosyl)glycinamide: step 2/2. The polypeptide is Phosphoribosylformylglycinamidine cyclo-ligase (Tolumonas auensis (strain DSM 9187 / NBRC 110442 / TA 4)).